A 298-amino-acid chain; its full sequence is Small ribosomal subunit biogenesis GTPase RsgA 1 (298 aa).

Positions 63 to 224 (QTQLVRPPVA…VADTPGFSSY (162 aa)) constitute a CP-type G domain. GTP is bound by residues 112–115 (AKTD) and 167–175 (GQTGAGKST). Zn(2+) contacts are provided by cysteine 248, cysteine 253, histidine 255, and cysteine 261.

It belongs to the TRAFAC class YlqF/YawG GTPase family. RsgA subfamily. In terms of assembly, monomer. Associates with 30S ribosomal subunit, binds 16S rRNA. It depends on Zn(2+) as a cofactor.

It is found in the cytoplasm. One of several proteins that assist in the late maturation steps of the functional core of the 30S ribosomal subunit. Helps release RbfA from mature subunits. May play a role in the assembly of ribosomal proteins into the subunit. Circularly permuted GTPase that catalyzes slow GTP hydrolysis, GTPase activity is stimulated by the 30S ribosomal subunit. The chain is Small ribosomal subunit biogenesis GTPase RsgA 1 from Lactiplantibacillus plantarum (strain ATCC BAA-793 / NCIMB 8826 / WCFS1) (Lactobacillus plantarum).